The following is a 130-amino-acid chain: Small ribosomal subunit protein uS9 (130 aa).

The protein belongs to the universal ribosomal protein uS9 family.

This Blochmanniella floridana protein is Small ribosomal subunit protein uS9.